A 64-amino-acid polypeptide reads, in one-letter code: Large ribosomal subunit protein bL35 (64 aa).

The interval 1 to 43 (MPKMKSKKSLAKRVIAKKNGTLKRGKAYRSHRATGKTTKQKRH) is disordered.

It belongs to the bacterial ribosomal protein bL35 family.

The sequence is that of Large ribosomal subunit protein bL35 from Mesoplasma florum (strain ATCC 33453 / NBRC 100688 / NCTC 11704 / L1) (Acholeplasma florum).